Reading from the N-terminus, the 176-residue chain is MENKYSRLQISIHWLVFLLVIAAYCAMEFRGFFPRSDRPLINMIHVSCGISILVLMVVRLLLRLKYPTPPIIPKPKPMMTGLAHLGHLVIYLLFIALPVIGLVMMYNRGNPWFAFGLTMPYASEANFERVDSLKSWHETLANLGYFVIGLHAAAALAHHYFWKDNTLLRMMPRKRS.

Topologically, residues 1 to 7 (MENKYSR) are cytoplasmic. The helical transmembrane segment at 8–29 (LQISIHWLVFLLVIAAYCAMEF) threads the bilayer. Residue histidine 13 participates in heme b binding. Over 30–39 (RGFFPRSDRP) the chain is Periplasmic. A helical membrane pass occupies residues 40-64 (LINMIHVSCGISILVLMVVRLLLRL). Histidine 45 contributes to the heme b binding site. Topologically, residues 65 to 77 (KYPTPPIIPKPKP) are cytoplasmic. A helical membrane pass occupies residues 78 to 103 (MMTGLAHLGHLVIYLLFIALPVIGLV). Topologically, residues 104–135 (MMYNRGNPWFAFGLTMPYASEANFERVDSLKS) are periplasmic. The chain crosses the membrane as a helical span at residues 136–158 (WHETLANLGYFVIGLHAAAALAH). Histidine 137 and histidine 151 together coordinate heme b. Residues 159 to 176 (HYFWKDNTLLRMMPRKRS) are Cytoplasmic-facing.

It belongs to the cytochrome b561 family. In terms of assembly, monomer. Heme b is required as a cofactor.

The protein resides in the cell inner membrane. The catalysed reaction is a ubiquinol + 2 O2 = 2 superoxide + a ubiquinone + 2 H(+). The enzyme catalyses a menaquinol + 2 O2 = 2 superoxide + a menaquinone + 2 H(+). Quinone binding to the enzyme accelerates the reaction with superoxide. In terms of biological role, B-type di-heme cytochrome. Catalyzes the oxidation of superoxide to molecular oxygen and transfers the extracted electrons to ubiquinone through the two hemes. Can also use menaquinone. The enzyme may be responsible for the detoxification of the superoxide anion produced in the membrane or at its surface. However, it can also efficiently catalyze the formation of superoxide from ubiquinol under physiological conditions. The chain is Superoxide oxidase CybB from Escherichia coli (strain K12).